The chain runs to 455 residues: Homeobox protein 14 (455 aa).

Composition is skewed to low complexity over residues 1 to 16 (MNHN…KNNS), 24 to 39 (SSRS…SSSG), 81 to 118 (TTTT…ESPN), 179 to 239 (ESPN…SPSF), and 263 to 294 (NNNN…TNNN). 4 disordered regions span residues 1-53 (MNHN…SSIN), 67-121 (KQTK…NCNK), 178-239 (SESP…SPSF), and 258-296 (TLLS…NNGD). 2 DNA-binding regions (homeobox) span residues 310–369 (KSGQ…SKSG) and 372–431 (SYAK…NKLS). The tract at residues 431-455 (SSKANQDNDNNNNNENNDDSYSDEG) is disordered. Residues 435 to 445 (NQDNDNNNNNE) show a composition bias toward low complexity. Residues 446–455 (NNDDSYSDEG) show a composition bias toward acidic residues.

It localises to the nucleus. Functionally, putative transcription factor. This chain is Homeobox protein 14 (hbx14), found in Dictyostelium discoideum (Social amoeba).